A 443-amino-acid polypeptide reads, in one-letter code: Alpha-amylase (443 aa).

An N-terminal signal peptide occupies residues 1–24 (MHNTLFRTALLAAALGSFSHTASA). The substrate site is built by H114 and R196. D198 serves as the catalytic Nucleophile. 201-202 (KH) lines the substrate pocket. The active-site Proton donor is the E223. 2 residues coordinate substrate: G228 and H287.

The protein belongs to the glycosyl hydrolase 13 family.

The protein localises to the secreted. The catalysed reaction is Endohydrolysis of (1-&gt;4)-alpha-D-glucosidic linkages in polysaccharides containing three or more (1-&gt;4)-alpha-linked D-glucose units.. This Aeromonas hydrophila protein is Alpha-amylase (amyA).